A 748-amino-acid chain; its full sequence is Photosystem I P700 chlorophyll a apoprotein A1 (748 aa).

Helical transmembrane passes span 70 to 93 (VFSA…FHGA), 156 to 179 (LYST…YHYH), 195 to 219 (LNHH…HVSL), 291 to 309 (TAHH…GHQY), 346 to 369 (WHAQ…HHMY), 385 to 411 (LSLF…IFLV), 433 to 455 (AIIS…LYIH), and 530 to 548 (FLVH…LILL). [4Fe-4S] cluster-binding residues include Cys-572 and Cys-581. 2 helical membrane passes run 588-609 (HVFL…HFSW) and 662-684 (LSAY…MFLF). His-673 contacts chlorophyll a'. Chlorophyll a-binding residues include Met-681 and Tyr-689. Residue Trp-690 participates in phylloquinone binding. Residues 722 to 742 (AVGVAHYLLGGIATTWAFFLA) form a helical membrane-spanning segment.

This sequence belongs to the PsaA/PsaB family. The PsaA/B heterodimer binds the P700 chlorophyll special pair and subsequent electron acceptors. PSI consists of a core antenna complex that captures photons, and an electron transfer chain that converts photonic excitation into a charge separation. The eukaryotic PSI reaction center is composed of at least 11 subunits. The cofactor is P700 is a chlorophyll a/chlorophyll a' dimer, A0 is one or more chlorophyll a, A1 is one or both phylloquinones and FX is a shared 4Fe-4S iron-sulfur center..

The protein resides in the plastid. It localises to the chloroplast thylakoid membrane. The enzyme catalyses reduced [plastocyanin] + hnu + oxidized [2Fe-2S]-[ferredoxin] = oxidized [plastocyanin] + reduced [2Fe-2S]-[ferredoxin]. Functionally, psaA and PsaB bind P700, the primary electron donor of photosystem I (PSI), as well as the electron acceptors A0, A1 and FX. PSI is a plastocyanin-ferredoxin oxidoreductase, converting photonic excitation into a charge separation, which transfers an electron from the donor P700 chlorophyll pair to the spectroscopically characterized acceptors A0, A1, FX, FA and FB in turn. Oxidized P700 is reduced on the lumenal side of the thylakoid membrane by plastocyanin. The polypeptide is Photosystem I P700 chlorophyll a apoprotein A1 (Chaetosphaeridium globosum (Charophycean green alga)).